Consider the following 388-residue polypeptide: MKILYFDCFAGIAGDMTVAALLDLGVPFEVVRDAVGCLRLPHSSYSLATERTSRKGITATRFVVHVEEHQPNRHYGDIAAMIEESPLADGIKEKAQRIFFRLAEAEAKVHGVELGRVHFHEVGAVDSIADIVGAAAAIDWLGIESIHGGALPLGSGFVETAHGRLPVPAPATAELLRGIPVHGEAGPGERVTPTGAAILAALAAGFGPIPPMTVTGVGCGAGTRDFADIPNILRVFQGEIDRGFERDDVVVIEAHIDDTSPEILGYVMERCLAAGALDAAFSPLQMKKNRPAVRLTVVVHPEQRDELAALILRETSAIGVRFHPAGRLKLRRLVEERDTTLGRVRVKVINGDGVARVAPEYDDCCRIAAERGMPLMEVYRIVERECGQ.

The protein belongs to the LarC family.

The sequence is that of Putative nickel insertion protein from Geobacter sulfurreducens (strain ATCC 51573 / DSM 12127 / PCA).